The chain runs to 500 residues: Melanopsin-like (500 aa).

At 1-65 the chain is on the extracellular side; sequence MSHHSSWRGH…TVDVPDHAHY (65 aa). Asn18 carries N-linked (GlcNAc...) asparagine glycosylation. Residues 66–86 traverse the membrane as a helical segment; that stretch reads IIGSVILIVGITGVIGNALVV. Residues 87-101 lie on the Cytoplasmic side of the membrane; sequence YVFCRSRTLRTAGNM. A helical membrane pass occupies residues 102–122; the sequence is FIVNLAVADFLMSVTQSPVFF. Topologically, residues 123–138 are extracellular; sequence AASLHRRWVFGERPCE. The cysteines at positions 137 and 215 are disulfide-linked. The chain crosses the membrane as a helical span at residues 139–159; it reads LYAFCGALFGICSMMTLTAIA. Topologically, residues 160 to 182 are cytoplasmic; that stretch reads ADRCLAITQPLALVSRVSRRKAG. The chain crosses the membrane as a helical span at residues 183–203; sequence AVLVVVWLYSLGWSLPPFFGW. The Extracellular segment spans residues 204–232; that stretch reads SAYVPEGLQTSCSWDYMTFTPSVRAYTIL. A helical transmembrane segment spans residues 233–253; it reads LFVFVFFIPLGIIGSCYFAIF. The Cytoplasmic segment spans residues 254–286; the sequence is QTIRAAGKEIRELDCGETHKVYERMQNEWKMAK. Residues 287 to 307 traverse the membrane as a helical segment; that stretch reads VALVVIVLFIISWSPYSVVAL. Topologically, residues 308 to 322 are extracellular; it reads TATAGYSHFLTPYMN. The helical transmembrane segment at 323–343 threads the bilayer; the sequence is SVPAVIAKASAIHNPIIYAIT. Position 330 is an N6-(retinylidene)lysine (Lys330). Topologically, residues 344 to 500 are cytoplasmic; that stretch reads HPKYRVAIAR…SDGKALLGGN (157 aa). The disordered stretch occupies residues 404-428; the sequence is RWGKTRLSSASDSDSCWTESEADGS. Residues 409–428 are compositionally biased toward polar residues; sequence RLSSASDSDSCWTESEADGS.

This sequence belongs to the G-protein coupled receptor 1 family. Opsin subfamily. As to expression, expressed in a subset of retinal horizontal cells.

It is found in the cell membrane. Its function is as follows. Photoreceptor implicated in non-image-forming responses to light. The polypeptide is Melanopsin-like (opn4l) (Danio rerio (Zebrafish)).